A 279-amino-acid chain; its full sequence is Small ribosomal subunit protein uS2 (279 aa).

The interval 232–260 (KVDMEAAGENAPKGAGKKKNTKARMDKAE) is disordered.

The protein belongs to the universal ribosomal protein uS2 family.

The protein is Small ribosomal subunit protein uS2 of Phocaeicola vulgatus (strain ATCC 8482 / DSM 1447 / JCM 5826 / CCUG 4940 / NBRC 14291 / NCTC 11154) (Bacteroides vulgatus).